Reading from the N-terminus, the 246-residue chain is Probable transcriptional regulatory protein WD_0484 (246 aa).

The disordered stretch occupies residues 1–22; it reads MAGHSQFSNIKHRKGAQDAKRS.

The protein belongs to the TACO1 family.

The protein localises to the cytoplasm. The polypeptide is Probable transcriptional regulatory protein WD_0484 (Wolbachia pipientis wMel).